Here is a 280-residue protein sequence, read N- to C-terminus: uncharacterized protein (280 aa).

Disordered stretches follow at residues 20–41, 170–199, and 251–280; these read DVKKSQQQQQQQPQAPPQQQQQ, INSPPPPQEEEKPQLSKKEEPEWLKGKDKA, and GNSKPYTSSNATNKPFTTASKSTNSYSFSF. Residues 25-41 show a composition bias toward low complexity; sequence QQQQQQQPQAPPQQQQQ. A compositionally biased stretch (basic and acidic residues) spans 178-199; that stretch reads EEEKPQLSKKEEPEWLKGKDKA.

This is an uncharacterized protein from Dictyostelium discoideum (Social amoeba).